The chain runs to 111 residues: UPF0342 protein SAG1376 (111 aa).

Polar residues predominate over residues 52 to 63; it reads QEMMQSGQMPSQ. Residues 52 to 71 form a disordered region; the sequence is QEMMQSGQMPSQEEQDEMSK.

Belongs to the UPF0342 family.

The polypeptide is UPF0342 protein SAG1376 (Streptococcus agalactiae serotype V (strain ATCC BAA-611 / 2603 V/R)).